The primary structure comprises 230 residues: Orotidine 5'-phosphate decarboxylase (230 aa).

Residues Asp-10, Lys-32, 59–68, Thr-118, Arg-179, Gln-188, Gly-208, and Arg-209 contribute to the substrate site; that span reads DLKLHDIPNT. Lys-61 (proton donor) is an active-site residue.

The protein belongs to the OMP decarboxylase family. Type 1 subfamily. In terms of assembly, homodimer.

The enzyme catalyses orotidine 5'-phosphate + H(+) = UMP + CO2. The protein operates within pyrimidine metabolism; UMP biosynthesis via de novo pathway; UMP from orotate: step 2/2. Catalyzes the decarboxylation of orotidine 5'-monophosphate (OMP) to uridine 5'-monophosphate (UMP). In Opitutus terrae (strain DSM 11246 / JCM 15787 / PB90-1), this protein is Orotidine 5'-phosphate decarboxylase.